The following is a 601-amino-acid chain: Glutathione-regulated potassium-efflux system protein KefB (601 aa).

13 consecutive transmembrane segments (helical) span residues 4–24 (SDFL…VPLA), 29–49 (IGAV…GLGF), 55–75 (EILH…GLEL), 87–107 (IFGV…GLLM), 115–135 (AAVV…LQLM), 152–172 (VLLF…LLAG), 177–197 (HFDW…LIGG), 207–227 (FIAA…LVLG), 230–250 (LFMD…GVLL), 268–288 (GLLL…GVLY), 291–311 (LLWV…VLYL), 324–344 (MQFA…FSTA), and 356–376 (ALLL…MKLV). Residues 400-519 (KPQVIVVGFG…AGVTQFSRET (120 aa)) enclose the RCK N-terminal domain.

The protein belongs to the monovalent cation:proton antiporter 2 (CPA2) transporter (TC 2.A.37) family. KefB subfamily. Interacts with the regulatory subunit KefG.

It is found in the cell inner membrane. Its function is as follows. Pore-forming subunit of a potassium efflux system that confers protection against electrophiles. Catalyzes K(+)/H(+) antiport. In Escherichia coli (strain SMS-3-5 / SECEC), this protein is Glutathione-regulated potassium-efflux system protein KefB.